Here is a 412-residue protein sequence, read N- to C-terminus: Multifunctional CCA protein (412 aa).

ATP-binding residues include G8 and R11. CTP contacts are provided by G8 and R11. Mg(2+) contacts are provided by D21 and D23. The ATP site is built by R91, R137, and R140. R91, R137, and R140 together coordinate CTP. The region spanning 228–329 (TGIHTLMTLS…VKLFDSIDAW (102 aa)) is the HD domain.

It belongs to the tRNA nucleotidyltransferase/poly(A) polymerase family. Bacterial CCA-adding enzyme type 1 subfamily. In terms of assembly, monomer. Can also form homodimers and oligomers. Mg(2+) is required as a cofactor. Requires Ni(2+) as cofactor.

It catalyses the reaction a tRNA precursor + 2 CTP + ATP = a tRNA with a 3' CCA end + 3 diphosphate. The enzyme catalyses a tRNA with a 3' CCA end + 2 CTP + ATP = a tRNA with a 3' CCACCA end + 3 diphosphate. Its function is as follows. Catalyzes the addition and repair of the essential 3'-terminal CCA sequence in tRNAs without using a nucleic acid template. Adds these three nucleotides in the order of C, C, and A to the tRNA nucleotide-73, using CTP and ATP as substrates and producing inorganic pyrophosphate. tRNA 3'-terminal CCA addition is required both for tRNA processing and repair. Also involved in tRNA surveillance by mediating tandem CCA addition to generate a CCACCA at the 3' terminus of unstable tRNAs. While stable tRNAs receive only 3'-terminal CCA, unstable tRNAs are marked with CCACCA and rapidly degraded. This Escherichia coli O6:H1 (strain CFT073 / ATCC 700928 / UPEC) protein is Multifunctional CCA protein.